Consider the following 415-residue polypeptide: uncharacterized protein (415 aa).

Positions 66, 72, 75, and 149 each coordinate [4Fe-4S] cluster. Residues Gln-249, Phe-276, Glu-296, and Asp-344 each coordinate S-adenosyl-L-methionine. The Nucleophile role is filled by Cys-370.

The protein belongs to the class I-like SAM-binding methyltransferase superfamily. RNA M5U methyltransferase family.

This is an uncharacterized protein from Brucella suis biovar 1 (strain 1330).